We begin with the raw amino-acid sequence, 101 residues long: Movement protein (101 aa).

Residues 30–50 (EVAILSFVALICFYLLYLWVL) traverse the membrane as a helical segment. Positions 75-101 (VDRSNPIPNIPAPPSQGNPGPFVPGTG) are disordered.

Belongs to the mastrevirus movement protein family. Interacts with the capsid protein (CP). Part of a MP-CP-viral DNA complex.

The protein localises to the host membrane. Functionally, involved in the viral transport within, and between cells. This chain is Movement protein, found in Maize streak virus genotype A (isolate Kenya) (MSV).